The sequence spans 474 residues: MKTLYSLRRFYPVETLFNGTLAVAGRDQETTGFAWWAGNARLINLSGKLLGAHVAHAGLIVFWAGAMNLFEVAHFVPEKPMYEQGLILLPHLATLGWGVGPGGEVIDTFPYFVSGVLHLISSAVLGFGGIYHALLGPETLEESFPFFGYVWKDRNKMTTILGIHLILLGIGAFLLVFKALYFGGVYDTWAPGGGEMLRKITNLTLSPSVIFGYLLKSFFGGEGWIVSVDDLEDIIGGHVWLGSICIFGGIWHILTKPFAWARRALVWSGEAYLSYSLGALAVFGFIACCFVWFNNTAYPSEFYGPTGPEASQAQAFTFLVRDQRLGANVGSAQGPTGLGKYLMRSPTGEVIFGGETMRFWDLRAPWLEPLRGPNGLDLSRLKKDIQPWQERRSAEYMTHAPLGSLNSVGGVATEINAVNYVSPRTWLSTSHFVLGFFFFVGHLWHAGRARAAAAGFEKGIDRDFEPVLSMTPIN.

Residues Met-1–Glu-14 constitute a propeptide that is removed on maturation. Thr-15 is modified (N-acetylthreonine). Thr-15 is subject to Phosphothreonine. Helical transmembrane passes span Leu-69 to Ala-93, Leu-134 to Asn-155, Lys-178 to Thr-201, Lys-256 to Ser-276, and Trp-292 to Ala-313. Glu-368 serves as a coordination point for [CaMn4O5] cluster. Residues Arg-448 to Pro-472 form a helical membrane-spanning segment.

Belongs to the PsbB/PsbC family. PsbC subfamily. In terms of assembly, PSII is composed of 1 copy each of membrane proteins PsbA, PsbB, PsbC, PsbD, PsbE, PsbF, PsbH, PsbI, PsbJ, PsbK, PsbL, PsbM, PsbT, PsbX, PsbY, PsbZ, Psb30/Ycf12, at least 3 peripheral proteins of the oxygen-evolving complex and a large number of cofactors. It forms dimeric complexes. It depends on Binds multiple chlorophylls and provides some of the ligands for the Ca-4Mn-5O cluster of the oxygen-evolving complex. It may also provide a ligand for a Cl- that is required for oxygen evolution. PSII binds additional chlorophylls, carotenoids and specific lipids. as a cofactor.

The protein localises to the plastid. The protein resides in the chloroplast thylakoid membrane. Its function is as follows. One of the components of the core complex of photosystem II (PSII). It binds chlorophyll and helps catalyze the primary light-induced photochemical processes of PSII. PSII is a light-driven water:plastoquinone oxidoreductase, using light energy to abstract electrons from H(2)O, generating O(2) and a proton gradient subsequently used for ATP formation. This Citrus sinensis (Sweet orange) protein is Photosystem II CP43 reaction center protein.